A 509-amino-acid polypeptide reads, in one-letter code: Phytase A (509 aa).

The N-terminal stretch at 1 to 15 is a signal peptide; the sequence is MFLLMVPLFSYLAAA. Residues cysteine 27 and cysteine 36 are joined by a disulfide bond. Glutamine 46, tyrosine 47, arginine 75, histidine 76, arginine 79, threonine 82, and arginine 164 together coordinate 1D-myo-inositol hexakisphosphate. 4 cysteine pairs are disulfide-bonded: cysteine 65–cysteine 444, cysteine 216–cysteine 507, cysteine 266–cysteine 295, and cysteine 478–cysteine 486. Residue histidine 76 is the Nucleophile of the active site. N-linked (GlcNAc...) asparagine glycosylation is found at asparagine 171 and asparagine 208. Position 314 (lysine 314) interacts with 1D-myo-inositol hexakisphosphate. Residues asparagine 348, asparagine 352, and asparagine 367 are each glycosylated (N-linked (GlcNAc...) asparagine). Residues histidine 376 and aspartate 377 each coordinate 1D-myo-inositol hexakisphosphate. Asparagine 401 carries N-linked (GlcNAc...) asparagine glycosylation.

This sequence belongs to the histidine acid phosphatase family. In terms of assembly, monomer.

Its subcellular location is the secreted. The enzyme catalyses 1D-myo-inositol hexakisphosphate + H2O = 1D-myo-inositol 1,2,4,5,6-pentakisphosphate + phosphate. It carries out the reaction 1D-myo-inositol 1,2,4,5,6-pentakisphosphate + H2O = 1D-myo-inositol 1,2,5,6-tetrakisphosphate + phosphate. The catalysed reaction is 1D-myo-inositol 1,2,5,6-tetrakisphosphate + H2O = 1D-myo-inositol 1,2,6-trisphosphate + phosphate. It catalyses the reaction 1D-myo-inositol 1,2,6-trisphosphate + H2O = 1D-myo-inositol 1,2-bisphosphate + phosphate. The enzyme catalyses 1D-myo-inositol 1,2-bisphosphate + H2O = 1D-myo-inositol 2-phosphate + phosphate. In terms of biological role, catalyzes the phosphate monoester hydrolysis of phytic acid (myo-inositol hexakisphosphate), which results in the stepwise formation of myo-inositol pentakis-, tetrakis-, tris-, bis-, and monophosphates, as well as the liberation of inorganic phosphate. Myo-inositol 2-monophosphate is the end product. Is also able to dephosphorylate the classic acid phosphatase substrate p-nitrophenyl phosphate. The chain is Phytase A (pht-1) from Neurospora crassa (strain ATCC 24698 / 74-OR23-1A / CBS 708.71 / DSM 1257 / FGSC 987).